Here is a 119-residue protein sequence, read N- to C-terminus: Small ribosomal subunit protein bS6 (119 aa).

The protein belongs to the bacterial ribosomal protein bS6 family.

In terms of biological role, binds together with bS18 to 16S ribosomal RNA. The sequence is that of Small ribosomal subunit protein bS6 from Buchnera aphidicola subsp. Baizongia pistaciae (strain Bp).